The following is a 146-amino-acid chain: Large ribosomal subunit protein bL9 (146 aa).

Belongs to the bacterial ribosomal protein bL9 family. In terms of assembly, part of the 50S ribosomal subunit. Contacts protein L31.

Binds to the 23S rRNA and protein L31. The chain is Large ribosomal subunit protein bL9 (rplI) from Deinococcus radiodurans (strain ATCC 13939 / DSM 20539 / JCM 16871 / CCUG 27074 / LMG 4051 / NBRC 15346 / NCIMB 9279 / VKM B-1422 / R1).